The following is a 58-amino-acid chain: UPF0391 membrane protein Gbem_0127 (58 aa).

Helical transmembrane passes span 4–24 (WALI…GGIA) and 33–53 (ILFY…LLAG).

Belongs to the UPF0391 family.

The protein resides in the cell membrane. The protein is UPF0391 membrane protein Gbem_0127 of Citrifermentans bemidjiense (strain ATCC BAA-1014 / DSM 16622 / JCM 12645 / Bem) (Geobacter bemidjiensis).